Here is a 193-residue protein sequence, read N- to C-terminus: Non-specific lipid transfer protein GPI-anchored 1 (193 aa).

Positions 1–22 (MKGLHLHLVLVTMTIVASIAAA) are cleaved as a signal peptide. 4 disulfides stabilise this stretch: C35/C76, C45/C60, C61/C106, and C74/C116. 2 N-linked (GlcNAc...) asparagine glycosylation sites follow: N110 and N135. Residues 138–161 (TTPVAPAGKSPATPATSTDKGGSA) form a disordered region. D165 carries GPI-anchor amidated aspartate lipidation. A propeptide spans 166-193 (GHAVVALAVALMAVSFVLTLPRHVTLGM) (removed in mature form).

Belongs to the plant LTP family. In terms of processing, O-glycosylated on hydroxyprolines; noncontiguous hydroxylproline residues are glycosylated with arabinogalactan. Up-regulated in the epidermis of stems and leaves. Expressed in the epidermis, stem cortex, vascular bundles and mesophyll cells in root tips, cotyledons, seedlings, leaves, caulines, flowers, siliques, pollen, and early-developing seeds.

Its subcellular location is the cell membrane. It localises to the secreted. The protein localises to the cell wall. The protein resides in the endoplasmic reticulum. It is found in the golgi apparatus. Functionally, lipid transfer protein that, together with LTPG2, binds to lipids and functions as a component of the cuticular lipid export machinery that performs extensive export of intracellular lipids (e.g. C29 alkane) from epidermal cells to the surface to build the cuticular wax layer and silique walls. Involved in the establishment of resistance to the necrotrophic fungal pathogen Alternaria brassicicola. Contributes to pre-invasive defense against some non-host powdery mildew pathogens by preventing the penetration of the epidermal cell wall by the fungal agents (e.g. Blumeria graminis f. sp. hordei (Bgh)). Maybe involved in seed and ovule maturation and development, probably by regulating the fatty acids homeostasis during suberin and sporopollenin biosynthesis or deposition. The sequence is that of Non-specific lipid transfer protein GPI-anchored 1 from Arabidopsis thaliana (Mouse-ear cress).